The chain runs to 235 residues: Purine nucleoside phosphorylase DeoD-type (235 aa).

Residue histidine 4 coordinates a purine D-ribonucleoside. Residues glycine 20, arginine 24, arginine 43, and 87–90 each bind phosphate; that span reads RVGT. A purine D-ribonucleoside is bound by residues 179–181 and 203–204; these read EME and SD. Aspartate 204 serves as the catalytic Proton donor.

Belongs to the PNP/UDP phosphorylase family. Homohexamer; trimer of homodimers.

It catalyses the reaction a purine D-ribonucleoside + phosphate = a purine nucleobase + alpha-D-ribose 1-phosphate. The catalysed reaction is a purine 2'-deoxy-D-ribonucleoside + phosphate = a purine nucleobase + 2-deoxy-alpha-D-ribose 1-phosphate. In terms of biological role, catalyzes the reversible phosphorolytic breakdown of the N-glycosidic bond in the beta-(deoxy)ribonucleoside molecules, with the formation of the corresponding free purine bases and pentose-1-phosphate. In Brevibacillus brevis (strain 47 / JCM 6285 / NBRC 100599), this protein is Purine nucleoside phosphorylase DeoD-type.